We begin with the raw amino-acid sequence, 77 residues long: Coiled-coil-helix-coiled-coil-helix domain-containing protein C550.01c (77 aa).

Residues Lys-24–Leu-65 form the CHCH domain. 2 short sequence motifs (cx9C motif) span residues Cys-27–Cys-37 and Cys-47–Cys-57. 2 disulfide bridges follow: Cys-27-Cys-57 and Cys-37-Cys-47.

The protein localises to the cytoplasm. It is found in the nucleus. This chain is Coiled-coil-helix-coiled-coil-helix domain-containing protein C550.01c, found in Schizosaccharomyces pombe (strain 972 / ATCC 24843) (Fission yeast).